Reading from the N-terminus, the 193-residue chain is Cysteine and glycine-rich protein 1 (193 aa).

Residues 10 to 61 (CGVCQKTVYFAEEVQCEGNSFHKSCFLCMVCKKNLDSTTVAVHGEEIYCKSC) form the LIM zinc-binding 1 domain. The Nuclear localization signal signature appears at 64-69 (KKYGPK). Position 81 is a phosphoserine (serine 81). Position 84 is an N6-acetyllysine (lysine 84). A Glycyl lysine isopeptide (Lys-Gly) (interchain with G-Cter in SUMO2) cross-link involves residue lysine 91. An N6-acetyllysine mark is found at lysine 112, lysine 131, lysine 137, and lysine 161. The LIM zinc-binding 2 domain occupies 119 to 170 (CPRCSQAVYAAEKVIGAGKSWHKACFRCAKCGKGLESTTLADKDGEIYCKGC). Serine 192 bears the Phosphoserine mark.

In terms of assembly, interacts with ASCC1; ASCC2 and TRIP4.

The protein localises to the nucleus. Could play a role in neuronal development. This is Cysteine and glycine-rich protein 1 (CSRP1) from Homo sapiens (Human).